The primary structure comprises 357 residues: Putative minor fimbrial subunit PmfE (357 aa).

The signal sequence occupies residues 1 to 28 (MILNKKNIHSKSVMLFCAGIVSLMPLHA).

The protein resides in the fimbrium. The polypeptide is Putative minor fimbrial subunit PmfE (pmfE) (Proteus mirabilis (strain HI4320)).